A 121-amino-acid polypeptide reads, in one-letter code: Small ribosomal subunit protein uS13 (121 aa).

Residues 93–121 form a disordered region; the sequence is RGLPMRGQRTRTNARTRKGPRKAAQSLKK.

This sequence belongs to the universal ribosomal protein uS13 family. Part of the 30S ribosomal subunit. Forms a loose heterodimer with protein S19. Forms two bridges to the 50S subunit in the 70S ribosome.

In terms of biological role, located at the top of the head of the 30S subunit, it contacts several helices of the 16S rRNA. In the 70S ribosome it contacts the 23S rRNA (bridge B1a) and protein L5 of the 50S subunit (bridge B1b), connecting the 2 subunits; these bridges are implicated in subunit movement. Contacts the tRNAs in the A and P-sites. The sequence is that of Small ribosomal subunit protein uS13 from Albidiferax ferrireducens (strain ATCC BAA-621 / DSM 15236 / T118) (Rhodoferax ferrireducens).